The primary structure comprises 442 residues: Putative FNIP repeat-containing protein L170 (442 aa).

FNIP repeat units lie at residues 213–252, 253–294, and 295–348; these read FNSS…IGRG, FNSE…LGCF, and FNQS…FGMY.

In Acanthamoeba polyphaga mimivirus (APMV), this protein is Putative FNIP repeat-containing protein L170.